Reading from the N-terminus, the 971-residue chain is Sodium/calcium exchanger 1 (971 aa).

Residues Met-1–Ala-32 form the signal peptide. At Asp-33 to Lys-71 the chain is on the extracellular side. Asn-41 carries N-linked (GlcNAc...) asparagine glycosylation. Residues Ile-72 to Ile-92 traverse the membrane as a helical segment. Residues Ala-93 to Asn-133 lie on the Cytoplasmic side of the membrane. A helical transmembrane segment spans residues Leu-134–Cys-154. One copy of the Alpha-1 repeat lies at Ala-138–Ile-178. Over Gly-155 to Thr-167 the chain is Extracellular. Asn-157 carries an N-linked (GlcNAc...) asparagine glycan. Residues Ile-168 to Pro-188 traverse the membrane as a helical segment. The Cytoplasmic segment spans residues Asp-189–Phe-201. Residues Phe-202–Ser-222 form a helical membrane-spanning segment. Residues Ser-223–Glu-228 are Extracellular-facing. The helical transmembrane segment at Val-229–Ala-249 threads the bilayer. Residues Asp-250–Gly-798 are Cytoplasmic-facing. The putative calmodulin-binding region stretch occupies residues Arg-251–Gly-270. 2 positions are modified to phosphoserine: Ser-282 and Ser-389. Calx-beta domains are found at residues Val-393 to Ser-493 and Ala-524 to Gly-624. Ca(2+) is bound by residues Glu-417, Asp-453, Asp-478, Asp-479, Ile-481, Glu-483, Glu-486, Asp-530, Asp-531, Asp-532, Glu-548, Asp-584, Asp-610, Glu-611, Glu-612, and Glu-716. A helical transmembrane segment spans residues Trp-799–Leu-819. Over Ala-820–His-822 the chain is Extracellular. A helical transmembrane segment spans residues Phe-823–Thr-843. One copy of the Alpha-2 repeat lies at Ala-840–Val-876. The Cytoplasmic portion of the chain corresponds to Ser-844–Asn-872. Residues Ala-873–Ala-893 traverse the membrane as a helical segment. Residues Asn-894–Thr-904 lie on the Extracellular side of the membrane. The chain crosses the membrane as a helical span at residues Leu-905 to Tyr-925. The Cytoplasmic portion of the chain corresponds to Arg-926–Lys-942. A helical membrane pass occupies residues Leu-943–Glu-963. The Extracellular segment spans residues Ala-964–Phe-971.

This sequence belongs to the Ca(2+):cation antiporter (CaCA) (TC 2.A.19) family. SLC8 subfamily. Detected in heart, brain cortex and hippocampus (at protein level). Cardiac sarcolemma or brain, and spleen. Expressed in all regions of the kidney, highest levels of expression in the distal convoluted tubule. Expressed throughout the CNS, in decreasing order of abundance in hippocampus, cortex, cerebellum, hypothalamus, midbrain and striatum. Expressed in numerous regions of the brain including multiple cortical layers, hippocampus, septal nuclei, thalamic nuclei, cerebellum, hypothalamus, olfactory bulb and brainstem. Also expressed in various regions of the spinal cord, ventricles and atria of the heart, lung, adrenals and kidney. Isoform 4 seems to be a predominant isoform in aorta, stomach, liver, and kidney.

Its subcellular location is the cell membrane. The protein localises to the cell projection. The protein resides in the dendrite. The enzyme catalyses Ca(2+)(in) + 3 Na(+)(out) = Ca(2+)(out) + 3 Na(+)(in). Its activity is regulated as follows. Activated by micromolar levels of Ca(2+). With respect to regulation, only active at low calcium concentrations. Not activated by PKC. Active at all calcium levels tested. Activated by PKC. Its activity is regulated as follows. Only active at low calcium concentrations. Activated by PKC. In terms of biological role, mediates the exchange of one Ca(2+) ion against three to four Na(+) ions across the cell membrane, and thereby contributes to the regulation of cytoplasmic Ca(2+) levels and Ca(2+)-dependent cellular processes. Contributes to Ca(2+) transport during excitation-contraction coupling in muscle. In a first phase, voltage-gated channels mediate the rapid increase of cytoplasmic Ca(2+) levels due to release of Ca(2+) stores from the endoplasmic reticulum. SLC8A1 mediates the export of Ca(2+) from the cell during the next phase, so that cytoplasmic Ca(2+) levels rapidly return to baseline. Required for normal embryonic heart development and the onset of heart contractions. The chain is Sodium/calcium exchanger 1 (Slc8a1) from Rattus norvegicus (Rat).